The chain runs to 442 residues: D-serine dehydratase (442 aa).

N6-(pyridoxal phosphate)lysine is present on K118.

It belongs to the serine/threonine dehydratase family. DsdA subfamily. Monomer. Requires pyridoxal 5'-phosphate as cofactor.

It carries out the reaction D-serine = pyruvate + NH4(+). The polypeptide is D-serine dehydratase (Escherichia coli O139:H28 (strain E24377A / ETEC)).